Here is a 189-residue protein sequence, read N- to C-terminus: Protein GrpE (189 aa).

Basic and acidic residues predominate over residues 1–14 (MTEKNEEVVEDKNI). A disordered region spans residues 1–38 (MTEKNEEVVEDKNISDQTDENLTEEIESEADDLQVEPD). The segment covering 17 to 35 (QTDENLTEEIESEADDLQV) has biased composition (acidic residues).

This sequence belongs to the GrpE family. In terms of assembly, homodimer.

It localises to the cytoplasm. Its function is as follows. Participates actively in the response to hyperosmotic and heat shock by preventing the aggregation of stress-denatured proteins, in association with DnaK and GrpE. It is the nucleotide exchange factor for DnaK and may function as a thermosensor. Unfolded proteins bind initially to DnaJ; upon interaction with the DnaJ-bound protein, DnaK hydrolyzes its bound ATP, resulting in the formation of a stable complex. GrpE releases ADP from DnaK; ATP binding to DnaK triggers the release of the substrate protein, thus completing the reaction cycle. Several rounds of ATP-dependent interactions between DnaJ, DnaK and GrpE are required for fully efficient folding. The polypeptide is Protein GrpE (Leuconostoc mesenteroides subsp. mesenteroides (strain ATCC 8293 / DSM 20343 / BCRC 11652 / CCM 1803 / JCM 6124 / NCDO 523 / NBRC 100496 / NCIMB 8023 / NCTC 12954 / NRRL B-1118 / 37Y)).